The following is a 306-amino-acid chain: Porphobilinogen deaminase (306 aa).

Residue Cys239 is modified to S-(dipyrrolylmethanemethyl)cysteine.

This sequence belongs to the HMBS family. As to quaternary structure, monomer. Requires dipyrromethane as cofactor.

It catalyses the reaction 4 porphobilinogen + H2O = hydroxymethylbilane + 4 NH4(+). It functions in the pathway porphyrin-containing compound metabolism; protoporphyrin-IX biosynthesis; coproporphyrinogen-III from 5-aminolevulinate: step 2/4. Functionally, tetrapolymerization of the monopyrrole PBG into the hydroxymethylbilane pre-uroporphyrinogen in several discrete steps. The chain is Porphobilinogen deaminase (hemC) from Helicobacter pylori (strain ATCC 700392 / 26695) (Campylobacter pylori).